Consider the following 184-residue polypeptide: Lysozyme 1 (184 aa).

The first 20 residues, M1 to G20, serve as a signal peptide directing secretion. In terms of domain architecture, I-type lysozyme spans T69–N184. Cystine bridges form between C76-C152, C81-C87, C92-C101, C114-C134, C124-C130, and C148-C166. The active-site Proton donor is the E84. The Nucleophile role is filled by D95. K107–D113 contributes to the substrate binding site. Substrate is bound by residues Y138 and H159–G161.

As to expression, hemolymph, labial palps, non-vesiculated cells of mantle connective tissue, cells of interlamellar junctions and epithelia surrounding the water tubes of the gills.

The protein localises to the secreted. The enzyme catalyses Hydrolysis of (1-&gt;4)-beta-linkages between N-acetylmuramic acid and N-acetyl-D-glucosamine residues in a peptidoglycan and between N-acetyl-D-glucosamine residues in chitodextrins.. Has antibacterial activity against the Gram-positive bacteria L.garvieae, M.luteus and Enterococcus sp., and the Gram-negative bacteria E.coli and V.vulnificus. Weak antibacterial activity against the Gram-negative bacterium A.hydrophila. No antibacterial activity detected against the Gram-positive bacterium S.iniae or against the Gram-negative bacterium E.ictaluri. Shows some chitinase activity but no isopeptidase activity. This is Lysozyme 1 from Crassostrea virginica (Eastern oyster).